A 173-amino-acid chain; its full sequence is Co-chaperone protein HscB homolog (173 aa).

Residues 2-74 enclose the J domain; sequence NYFELFSLSP…ISRAEHMLSL (73 aa).

This sequence belongs to the HscB family. As to quaternary structure, interacts with HscA and stimulates its ATPase activity.

Co-chaperone involved in the maturation of iron-sulfur cluster-containing proteins. Seems to help targeting proteins to be folded toward HscA. In Shewanella loihica (strain ATCC BAA-1088 / PV-4), this protein is Co-chaperone protein HscB homolog.